The following is a 333-amino-acid chain: HTH-type transcriptional regulator Cphy_2742 (333 aa).

An HTH lacI-type domain is found at 1 to 55 (MNIYDVSQKAGVSIATVSRVINGNPNVSEKTKQKVLDVMKEIGYTPNVFARGLGL). The H-T-H motif DNA-binding region spans 3–22 (IYDVSQKAGVSIATVSRVIN).

Its subcellular location is the cytoplasm. Its function is as follows. Involved in control of pectin and galacturonic acid metabolism. Probably represses a comprehensive set of pectin fermentation genes by binding a conserved palindrome at or downstream of their transcription start site to block transcription. In the presence of galacturonic acid may activate transcription of acetate synthesis and other aspects of carbon metabolism. This Lachnoclostridium phytofermentans (strain ATCC 700394 / DSM 18823 / ISDg) (Clostridium phytofermentans) protein is HTH-type transcriptional regulator Cphy_2742.